The sequence spans 234 residues: Biosynthetic peptidoglycan transglycosylase (234 aa).

Residues 11-31 (RFLLFAMLGFVGLSVLLVLVF) form a helical membrane-spanning segment.

The protein belongs to the glycosyltransferase 51 family.

The protein resides in the cell inner membrane. It carries out the reaction [GlcNAc-(1-&gt;4)-Mur2Ac(oyl-L-Ala-gamma-D-Glu-L-Lys-D-Ala-D-Ala)](n)-di-trans,octa-cis-undecaprenyl diphosphate + beta-D-GlcNAc-(1-&gt;4)-Mur2Ac(oyl-L-Ala-gamma-D-Glu-L-Lys-D-Ala-D-Ala)-di-trans,octa-cis-undecaprenyl diphosphate = [GlcNAc-(1-&gt;4)-Mur2Ac(oyl-L-Ala-gamma-D-Glu-L-Lys-D-Ala-D-Ala)](n+1)-di-trans,octa-cis-undecaprenyl diphosphate + di-trans,octa-cis-undecaprenyl diphosphate + H(+). It participates in cell wall biogenesis; peptidoglycan biosynthesis. Peptidoglycan polymerase that catalyzes glycan chain elongation from lipid-linked precursors. The protein is Biosynthetic peptidoglycan transglycosylase of Chromohalobacter salexigens (strain ATCC BAA-138 / DSM 3043 / CIP 106854 / NCIMB 13768 / 1H11).